Reading from the N-terminus, the 168-residue chain is Peptidyl-prolyl cis-trans isomerase-like 3 (168 aa).

A PPIase cyclophilin-type domain is found at 1-156 (MSVTLHTNVG…SEIRMTGVTV (156 aa)).

It belongs to the cyclophilin-type PPIase family. PPIL3 subfamily.

The enzyme catalyses [protein]-peptidylproline (omega=180) = [protein]-peptidylproline (omega=0). PPIases accelerate the folding of proteins. It catalyzes the cis-trans isomerization of proline imidic peptide bonds in oligopeptides. This Mycosarcoma maydis (Corn smut fungus) protein is Peptidyl-prolyl cis-trans isomerase-like 3 (CYP10).